Reading from the N-terminus, the 386-residue chain is Succinate--CoA ligase [ADP-forming] subunit beta (386 aa).

The region spanning 9-244 is the ATP-grasp domain; that stretch reads KEILRKYGVP…HDEEDPLETR (236 aa). ATP is bound by residues lysine 46, 53–55, glutamate 99, cysteine 102, and glutamate 107; that span reads GRG. Residues asparagine 199 and aspartate 213 each coordinate Mg(2+). Substrate is bound by residues asparagine 264 and 321-323; that span reads GIM.

This sequence belongs to the succinate/malate CoA ligase beta subunit family. In terms of assembly, heterotetramer of two alpha and two beta subunits. The cofactor is Mg(2+).

It catalyses the reaction succinate + ATP + CoA = succinyl-CoA + ADP + phosphate. It carries out the reaction GTP + succinate + CoA = succinyl-CoA + GDP + phosphate. The protein operates within carbohydrate metabolism; tricarboxylic acid cycle; succinate from succinyl-CoA (ligase route): step 1/1. Succinyl-CoA synthetase functions in the citric acid cycle (TCA), coupling the hydrolysis of succinyl-CoA to the synthesis of either ATP or GTP and thus represents the only step of substrate-level phosphorylation in the TCA. The beta subunit provides nucleotide specificity of the enzyme and binds the substrate succinate, while the binding sites for coenzyme A and phosphate are found in the alpha subunit. The sequence is that of Succinate--CoA ligase [ADP-forming] subunit beta from Rickettsia conorii (strain ATCC VR-613 / Malish 7).